A 694-amino-acid polypeptide reads, in one-letter code: Envelope glycoprotein H (694 aa).

An N-terminal signal peptide occupies residues M1 to S16. Residues W17 to I671 lie on the Virion surface side of the membrane. N-linked (GlcNAc...) asparagine; by host glycosylation is found at N51, N76, N148, N206, N337, N365, N384, N411, N538, N573, N593, and N652. The tract at residues Y174 to I234 is interaction with gL. Residues L672–R692 traverse the membrane as a helical segment. Topologically, residues L693 to C694 are intravirion.

It belongs to the herpesviridae glycoprotein H family. Interacts with glycoprotein L (gL); this interaction is necessary for the correct processing and cell surface expression of gH. The heterodimer gH/gL seems to interact with gB trimers during fusion. N-glycosylated, O-glycosylated, and sialylated.

The protein localises to the virion membrane. It is found in the host cell membrane. It localises to the host endosome membrane. The heterodimer glycoprotein H-glycoprotein L is required for the fusion of viral and plasma membranes leading to virus entry into the host cell. Following initial binding to host receptor, membrane fusion is mediated by the fusion machinery composed of gB and the heterodimer gH/gL. May also be involved in the fusion between the virion envelope and the outer nuclear membrane during virion morphogenesis. This Human herpesvirus 6B (strain Z29) (HHV-6 variant B) protein is Envelope glycoprotein H.